The primary structure comprises 163 residues: Lipoprotein signal peptidase (163 aa).

Helical transmembrane passes span 4–24 (SAALFCRPVPAILFILSLLIL), 66–86 (LDAWVIVVMRLAIVAFVAWLW), and 92–112 (DHQFAHLGYCLIIAGAFGNII). Active-site residues include D122 and D140. Residues 132-152 (SFAVFNLADSLITIGAGFILL) traverse the membrane as a helical segment.

This sequence belongs to the peptidase A8 family.

It is found in the cell inner membrane. It catalyses the reaction Release of signal peptides from bacterial membrane prolipoproteins. Hydrolyzes -Xaa-Yaa-Zaa-|-(S,diacylglyceryl)Cys-, in which Xaa is hydrophobic (preferably Leu), and Yaa (Ala or Ser) and Zaa (Gly or Ala) have small, neutral side chains.. Its pathway is protein modification; lipoprotein biosynthesis (signal peptide cleavage). In terms of biological role, this protein specifically catalyzes the removal of signal peptides from prolipoproteins. The polypeptide is Lipoprotein signal peptidase (Allorhizobium ampelinum (strain ATCC BAA-846 / DSM 112012 / S4) (Agrobacterium vitis (strain S4))).